We begin with the raw amino-acid sequence, 273 residues long: Putative pyruvate, phosphate dikinase regulatory protein (273 aa).

ADP is bound at residue 153–160 (GVSRTSKS).

Belongs to the pyruvate, phosphate/water dikinase regulatory protein family. PDRP subfamily.

The catalysed reaction is N(tele)-phospho-L-histidyl/L-threonyl-[pyruvate, phosphate dikinase] + ADP = N(tele)-phospho-L-histidyl/O-phospho-L-threonyl-[pyruvate, phosphate dikinase] + AMP + H(+). It carries out the reaction N(tele)-phospho-L-histidyl/O-phospho-L-threonyl-[pyruvate, phosphate dikinase] + phosphate + H(+) = N(tele)-phospho-L-histidyl/L-threonyl-[pyruvate, phosphate dikinase] + diphosphate. Its function is as follows. Bifunctional serine/threonine kinase and phosphorylase involved in the regulation of the pyruvate, phosphate dikinase (PPDK) by catalyzing its phosphorylation/dephosphorylation. The sequence is that of Putative pyruvate, phosphate dikinase regulatory protein from Ehrlichia ruminantium (strain Gardel).